A 517-amino-acid polypeptide reads, in one-letter code: Ribonuclease Y (517 aa).

A helical membrane pass occupies residues 1–21; the sequence is MIESLIALIAAIVGLGIGYLV. The KH domain maps to 207–273; sequence LINVINIKND…TKVIELLVED (67 aa). The HD domain occupies 333-426; the sequence is ALAHSLEVAH…VCAADTLSAA (94 aa).

It belongs to the RNase Y family.

It localises to the cell membrane. Endoribonuclease that initiates mRNA decay. The protein is Ribonuclease Y of Campylobacter jejuni subsp. jejuni serotype O:23/36 (strain 81-176).